Consider the following 746-residue polypeptide: 1,4-alpha-glucan branching enzyme GlgB (746 aa).

Residue Asp-418 is the Nucleophile of the active site. Glu-471 acts as the Proton donor in catalysis.

The protein belongs to the glycosyl hydrolase 13 family. GlgB subfamily. In terms of assembly, monomer.

The enzyme catalyses Transfers a segment of a (1-&gt;4)-alpha-D-glucan chain to a primary hydroxy group in a similar glucan chain.. The protein operates within glycan biosynthesis; glycogen biosynthesis. Catalyzes the formation of the alpha-1,6-glucosidic linkages in glycogen by scission of a 1,4-alpha-linked oligosaccharide from growing alpha-1,4-glucan chains and the subsequent attachment of the oligosaccharide to the alpha-1,6 position. The sequence is that of 1,4-alpha-glucan branching enzyme GlgB from Nitrosospira multiformis (strain ATCC 25196 / NCIMB 11849 / C 71).